A 247-amino-acid chain; its full sequence is Phosphoribosylaminoimidazole-succinocarboxamide synthase (247 aa).

Belongs to the SAICAR synthetase family.

It catalyses the reaction 5-amino-1-(5-phospho-D-ribosyl)imidazole-4-carboxylate + L-aspartate + ATP = (2S)-2-[5-amino-1-(5-phospho-beta-D-ribosyl)imidazole-4-carboxamido]succinate + ADP + phosphate + 2 H(+). Its pathway is purine metabolism; IMP biosynthesis via de novo pathway; 5-amino-1-(5-phospho-D-ribosyl)imidazole-4-carboxamide from 5-amino-1-(5-phospho-D-ribosyl)imidazole-4-carboxylate: step 1/2. The polypeptide is Phosphoribosylaminoimidazole-succinocarboxamide synthase (Herpetosiphon aurantiacus (strain ATCC 23779 / DSM 785 / 114-95)).